The primary structure comprises 97 residues: uncharacterized protein (97 aa).

This sequence to B.licheniformis xpaL1 and to B.subtilis XhlA.

This is an uncharacterized protein from Bacillus licheniformis.